The chain runs to 2812 residues: MTSLNDIVNKLSSSKIKTRSDALQNLRSYIIYSRNGNSLNQEDALIIEKAIKRAFELEWQISANHGKRQISKASQEQKLQDISYLLRTCVESYILLFREPHILALLDIILRHTFTANGSICEVVCLNFSKALRLLLSHSPHLHHLRFSDWQSLVSYCCQAIEKLSIAEETYVSDSEEEPISQKNYQEISIWKSHDVIRVKQEVVELIYVMRSLVQWYAAPINFVSEQLLKFFEFFFYAYTEETDAHLPALQCLFQLCAYAIPNCNDYSASVVLLVFKILINSDKWKRLDLRLQLIQCLAISYPLWSNSETWDPHRSIRSFNLDLLNSSFFSLKNFLNFFGKRSSLSLANFRFHTVEPKNNIAKLYDPRLHLFFSLRHNSFFESYFIYFFLAKLILLKKTVLSLASTEQANKKQKTCSQIEELLLQAELANISASSFSLQLMVIITAISDNLTNDDLLSIQKMSLNFTEKKNELQSWSFFILFNICYNKAYSSMLTTSCKKEILAAASRGLLNSVTSPVCYQILTYFNMYRPLCFASIFPFIKQQFILFNDYSPMLSYEAIDYWKSLYILLNENLFVGQSSFKSVFLKWLKWHLYHLFSKEGELPFFSFTDSSIIIFDLLMMIFYRPLSLSYITTEIRSPFERNLFHLKEAWSPVTLRFPYTTDEICKQSTEGCYPFNSNHTIDCDSLQNVIKMLESSIDEISSASYDKDELDKETPSFEAVMIFSQISFLCGFLNCFIQKKGIHNVTPNNLVIFKNLFPEVLSFVKSNHSYDPIINCISTNLQFTISDEPKHLRYEIGSDLIRSTHFRDSNPLKTLVLYIMDMASKNVFIKPQEFDHDEYFSQEEEDIYRPENLIRNHQILGLMEGSLEQIRNTDLFILQKYIDYFSSHPHDSLINILHLYPIETFCFGMSAIGAYFLDVARTSEPIFYKCLEILAQKILMNYDYERDEVYLMIFIKIFQKCVHSKLQFTDATLKLIVKITKFIEKVFIETKFSSLSGRQTFLKFIFQLSPTSHVYSKFDYQKLISLTLKDSDVCVIYNFVDDLVIFLKKCDKTLIEGFVLPILSIKIEKSLYKGFCYLYLTLKVFLSISSNRSALLYQLLKLANSYETSTIFEPLLRKLHIQSANIKQLFRIYRLEIFWSFVSKDLSNTTNDFLEFPYKPIYFSLSDFLKENSDEIILVLILTKNITLAKLITSRMSVDFSEKYTQLIPVITTYTHLSEVENKKYSLRFNSIDEALDVELLNRSKAFLFCLEMLKEVKELGSTFKSISSTSFKVYSQLTIFANRVSFNNSTAIPFFSTKSVLWYCNRLFQELEGFSSIPSVIDLVLRRLAIQLHFATDEELQVTISFRLCAFLCFSDPFITSNYLVMIVLRIARQLLSIPCTQSLGLGIARFHLKKFKPTDFDYFFQLAEFCMDFLGFCYNTIGTKMEAIQDFYTWFDGYVTALLNFEYEGYGFLRCQINFVRSVMTTKNEWIEVSNKLFERGHFLKRIAMNNYLCLYFWQVLDACPRNVLHSLSLEIWKCYKAYDITEFPDSLKLFFSDIMGWNFFKSPEIADLNHYIPKTDPRLCDTKTYEESKLIIWKLICQKACSLLFKYDILLDSFIEDCIRMFFENGNHQELRKFLNFPKDSIIYDSDFKTLVSEEGSFQWVKLQPTNFDSLSNWTKEETLKLLNMMGKSSTTHSLKLLSTYMVGFSTSIIQYIIHLILLEFDFNGNNKKQKEYVTQLILSGLLNKNTNSIRKTCMNILLYLRRQLGHHALNPFEANYWVPINYSVAASTAYDCHLYEQSLLFLTIHNTKTDELDITLLSDILSQLPCPDAYYGIKRETSFKNILLKAVHEKRSPLAISYLDAANMYRSNEDEGTKMMFSNTLNNAGFFSLNEFYIDSLKANDAIDECSNEVYASAWRMQKWDIPPLSLDNKTTKDCLVFEVLHAVHNYAIYGNYLHLEEYINKKLLLINPNEEPDSLLFYALAYDLKFLIRCNQSQFNCDILQLLKENKQMSSQLHECFQLLLEIRNVLLSLLQSHKQLDLSDDLASFRKYYILELLKISESFLIVDNLQNAFSVAMLSDALYRKFDLADENLKHDIDFLSSKILWQRDEKIDAIGMLSESLSKTNSSIFPSISYAYLGNWLYTTKSEKTELVSKNYFEKSLSHMSHLNAKEKAKIYCMFAQFCDNNYSSPDLTEDFKRMEKLYFEKKNDIQQLERSIVNASNMKEEKMLKNHHSREMSSFIIDEREYLRMSTFRSKMLTQSITHYLKCLSESDENDVLISRCCTMWLSNSHLDELNNSLQHYLQNLPCKKFIPVFYQLAARLMNENSKFQQSLTSICYNVGRNHPYHSLHVLFSLVSNVPEIENLDAGSRYRAVKKILDLLKVNQGLSNLVTKLLCSFENYVSLAEWNPRSKVDSTSFSRFPGYKWFLKDAANYGLPPITMNVKVNDTGDYSNIPTVSSFDDTIHFASGINAPKVITCLGSNGHTYKQLVKGGNDDLRQDAVMEQVFEQVNGFLRSYRKTSQRNLSMRTYKVIPLALKTGVIEWVQDTIPLGEYLDSAHKVYHPKEWSLSTCRKLIAEKQMEDLETRLKVYDLVCRHYRPVFRHFFLESYADPVQWFTTQTNYARSTAVASVLGHVLGLGDRHGQNILIDKTSGEVIHIDLGIAFEQGKKLPVPECVPFRLTRDVVDGMGITGVEGVFRRCMEFTLETLRREEDSLLSVLEVLRYDPLFSWLISPLRRMKKQKMQLENFNQPESGNITTDASRDPKIQRNNVSGESEAERAILKVRQKLSSTLSVEASVGELIRIAQDPSYLALMFCGWSAFQ.

In terms of domain architecture, FAT spans 1773-2347 (VAASTAYDCH…LHVLFSLVSN (575 aa)). The 310-residue stretch at 2449-2758 (FDDTIHFASG…DASRDPKIQR (310 aa)) folds into the PI3K/PI4K catalytic domain. The segment at 2455 to 2461 (FASGINA) is G-loop. The catalytic loop stretch occupies residues 2627-2635 (GLGDRHGQN). The interval 2647 to 2671 (HIDLGIAFEQGKKLPVPECVPFRLT) is activation loop. A compositionally biased stretch (polar residues) spans 2739-2749 (NQPESGNITTD). The tract at residues 2739–2763 (NQPESGNITTDASRDPKIQRNNVSG) is disordered. The FATC domain occupies 2780-2812 (STLSVEASVGELIRIAQDPSYLALMFCGWSAFQ).

This sequence belongs to the PI3/PI4-kinase family. ATM subfamily. Interacts with nbs1. This interaction is required for phosphorylation of histone H2A.

It is found in the nucleus. Its subcellular location is the chromosome. The protein localises to the telomere. It catalyses the reaction L-seryl-[protein] + ATP = O-phospho-L-seryl-[protein] + ADP + H(+). It carries out the reaction L-threonyl-[protein] + ATP = O-phospho-L-threonyl-[protein] + ADP + H(+). Its function is as follows. Serine/threonine protein kinase which activates checkpoint signaling upon genotoxic stresses such as ionizing radiation (IR), ultraviolet light (UV), or DNA replication stalling, thereby acting as a DNA damage sensor. Recognizes the substrate consensus sequence [ST]-Q. Phosphorylates histone H2A to form H2AS128ph (gamma-H2A) at sites of DNA damage, involved in the regulation of DNA damage response mechanism. Undirectly involved in the phosphorylation of rad32 which is necessary for its telomere function. Required for the control of telomere length and genome stability. In Schizosaccharomyces pombe (strain 972 / ATCC 24843) (Fission yeast), this protein is Serine/threonine-protein kinase tel1 (tel1).